Reading from the N-terminus, the 363-residue chain is S-adenosylmethionine:tRNA ribosyltransferase-isomerase (363 aa).

This sequence belongs to the QueA family. Monomer.

It is found in the cytoplasm. The catalysed reaction is 7-aminomethyl-7-carbaguanosine(34) in tRNA + S-adenosyl-L-methionine = epoxyqueuosine(34) in tRNA + adenine + L-methionine + 2 H(+). Its pathway is tRNA modification; tRNA-queuosine biosynthesis. In terms of biological role, transfers and isomerizes the ribose moiety from AdoMet to the 7-aminomethyl group of 7-deazaguanine (preQ1-tRNA) to give epoxyqueuosine (oQ-tRNA). This is S-adenosylmethionine:tRNA ribosyltransferase-isomerase from Haemophilus influenzae (strain ATCC 51907 / DSM 11121 / KW20 / Rd).